The primary structure comprises 154 residues: uncharacterized protein (154 aa).

Positions 104-124 are disordered; the sequence is NNNNNDNDNNNKEKEDNDEKE. The segment covering 112–124 has biased composition (basic and acidic residues); sequence NNNKEKEDNDEKE.

This is an uncharacterized protein from Dictyostelium discoideum (Social amoeba).